The chain runs to 229 residues: Uracil-DNA glycosylase (229 aa).

Asp64 (proton acceptor) is an active-site residue.

It belongs to the uracil-DNA glycosylase (UDG) superfamily. UNG family.

It is found in the cytoplasm. It carries out the reaction Hydrolyzes single-stranded DNA or mismatched double-stranded DNA and polynucleotides, releasing free uracil.. Functionally, excises uracil residues from the DNA which can arise as a result of misincorporation of dUMP residues by DNA polymerase or due to deamination of cytosine. This is Uracil-DNA glycosylase from Shigella flexneri serotype 5b (strain 8401).